The chain runs to 611 residues: Serine protease FAM111A (611 aa).

The PIP-box signature appears at 16–28 (KCNMKIEHYFSPV). Lys20 participates in a covalent cross-link: Glycyl lysine isopeptide (Lys-Gly) (interchain with G-Cter in SUMO2). Ser26 is subject to Phosphoserine. Residues Lys30 and Lys65 each participate in a glycyl lysine isopeptide (Lys-Gly) (interchain with G-Cter in SUMO2) cross-link. A disordered region spans residues 44–73 (ESRGDPRATTNTQAQRFHSPKKNPEDQTMP). The segment at 336 to 611 (KVTKNSSSIK…DVEMMSDEDL (276 aa)) is interaction with SV40 large T antigen. Residues His385, Asp439, and Ser541 each act as charge relay system in the active site.

It belongs to the FAM111 family. In terms of assembly, interacts (via PIP-box) with PCNA; then interaction is direct. (Microbial infection) Interacts with SV40 virus large T antigen and this interaction is required for efficient viral replication and sustained viral gene expression in restrictive cell types. As to quaternary structure, (Microbial infection) Interacts with vaccinia virus protein OPG079; this interaction promotes the degradation of OPG079. Post-translationally, autocatalytically cleaved; activating the protein. Autocatalytic cleavage takes place in trans.

It is found in the nucleus. The protein resides in the chromosome. Its subcellular location is the cytoplasm. Functionally, single-stranded DNA-binding serine protease that mediates the proteolytic cleavage of covalent DNA-protein cross-links (DPCs) during DNA synthesis, thereby playing a key role in maintaining genomic integrity. DPCs are highly toxic DNA lesions that interfere with essential chromatin transactions, such as replication and transcription, and which are induced by reactive agents, such as UV light or formaldehyde. Protects replication fork from stalling by removing DPCs, such as covalently trapped topoisomerase 1 (TOP1) adducts on DNA lesion, or poly(ADP-ribose) polymerase 1 (PARP1)-DNA complexes trapped by PARP inhibitors. Required for PCNA loading on replication sites. Promotes S-phase entry and DNA synthesis. Also acts as a restriction factor for some viruses including SV40 polyomavirus and vaccinia virus. Mechanistically, affects nuclear barrier function during viral replication by mediating the disruption of the nuclear pore complex (NPC) via its protease activity. In turn, interacts with vaccinia virus DNA-binding protein OPG079 in the cytoplasm and promotes its degradation without the need of its protease activity but through autophagy. This Homo sapiens (Human) protein is Serine protease FAM111A.